The following is a 427-amino-acid chain: Histidinol dehydrogenase (427 aa).

Substrate contacts are provided by S232, Q254, and H257. Residues Q254 and H257 each coordinate Zn(2+). Residues E322 and H323 each act as proton acceptor in the active site. 4 residues coordinate substrate: H323, D356, E410, and H415. Position 356 (D356) interacts with Zn(2+). Residue H415 participates in Zn(2+) binding.

This sequence belongs to the histidinol dehydrogenase family. Zn(2+) serves as cofactor.

The catalysed reaction is L-histidinol + 2 NAD(+) + H2O = L-histidine + 2 NADH + 3 H(+). It participates in amino-acid biosynthesis; L-histidine biosynthesis; L-histidine from 5-phospho-alpha-D-ribose 1-diphosphate: step 9/9. In terms of biological role, catalyzes the sequential NAD-dependent oxidations of L-histidinol to L-histidinaldehyde and then to L-histidine. This chain is Histidinol dehydrogenase, found in Listeria innocua serovar 6a (strain ATCC BAA-680 / CLIP 11262).